The chain runs to 487 residues: Malonate-semialdehyde dehydrogenase 2 (487 aa).

Residues Phe-154, Lys-178, Glu-181, Arg-182, and Ser-231 each coordinate NAD(+). Cys-286 functions as the Nucleophile in the catalytic mechanism. Position 386 (Glu-386) interacts with NAD(+).

Belongs to the aldehyde dehydrogenase family. IolA subfamily. Homotetramer.

It carries out the reaction 3-oxopropanoate + NAD(+) + CoA + H2O = hydrogencarbonate + acetyl-CoA + NADH + H(+). The catalysed reaction is 2-methyl-3-oxopropanoate + NAD(+) + CoA + H2O = propanoyl-CoA + hydrogencarbonate + NADH + H(+). It participates in polyol metabolism; myo-inositol degradation into acetyl-CoA; acetyl-CoA from myo-inositol: step 7/7. Functionally, catalyzes the oxidation of malonate semialdehyde (MSA) and methylmalonate semialdehyde (MMSA) into acetyl-CoA and propanoyl-CoA, respectively. Is involved in a myo-inositol catabolic pathway. Bicarbonate, and not CO2, is the end-product of the enzymatic reaction. This is Malonate-semialdehyde dehydrogenase 2 from Bacillus anthracis.